Here is a 190-residue protein sequence, read N- to C-terminus: Cancer-related nucleoside-triphosphatase (190 aa).

Ala-2 carries the N-acetylalanine modification. ATP contacts are provided by residues 9 to 16 (GPPGVGKT) and 109 to 116 (VCVIDEIG). Lys-165 is subject to N6-acetyllysine.

This sequence belongs to the THEP1 NTPase family. Monomer.

The enzyme catalyses a ribonucleoside 5'-triphosphate + H2O = a ribonucleoside 5'-diphosphate + phosphate + H(+). It carries out the reaction 5-methyl-UTP + H2O = 5-methyl-UDP + phosphate + H(+). It catalyses the reaction CTP + H2O = CDP + phosphate + H(+). The catalysed reaction is ATP + H2O = ADP + phosphate + H(+). The enzyme catalyses GTP + H2O = GDP + phosphate + H(+). Has nucleotide phosphatase activity towards ATP, GTP, CTP, TTP and UTP. Hydrolyzes nucleoside diphosphates with lower efficiency. This Homo sapiens (Human) protein is Cancer-related nucleoside-triphosphatase.